A 543-amino-acid polypeptide reads, in one-letter code: Probable malate:quinone oxidoreductase (543 aa).

It belongs to the MQO family. FAD is required as a cofactor.

It catalyses the reaction (S)-malate + a quinone = a quinol + oxaloacetate. Its pathway is carbohydrate metabolism; tricarboxylic acid cycle; oxaloacetate from (S)-malate (quinone route): step 1/1. This is Probable malate:quinone oxidoreductase from Acinetobacter baylyi (strain ATCC 33305 / BD413 / ADP1).